Here is a 296-residue protein sequence, read N- to C-terminus: UDP-N-acetylglucosamine transporter TMEM241 homolog (296 aa).

The next 10 membrane-spanning stretches (helical) occupy residues Ala-7 to Val-29, Trp-41 to Ile-61, Ser-67 to Ser-87, Leu-93 to Gln-113, Ile-126 to Phe-146, Asp-147 to Phe-167, Val-187 to Leu-207, Phe-217 to Lys-237, Ala-248 to Phe-266, and Val-272 to Ala-291.

The protein belongs to the nucleotide-sugar transporter family. SLC35A subfamily.

It localises to the golgi apparatus. Its subcellular location is the cis-Golgi network membrane. Its function is as follows. Golgi-localized UDP-N-acetylglucosamine (UDP-GlcNAc) transporter that transports UDP-N-acetylglucosamine into Golgi lumen. This chain is UDP-N-acetylglucosamine transporter TMEM241 homolog (tmem241), found in Xenopus laevis (African clawed frog).